The following is a 296-amino-acid chain: Diguanylate cyclase DgcZ (296 aa).

His22, Cys52, His79, and His83 together coordinate Zn(2+). The 133-residue stretch at 157–289 (LNLYLMLLDI…GRNRCMFIDE (133 aa)) folds into the GGDEF domain. The Mg(2+) site is built by Asp165 and Ile166. Residues Asn173, His178, Asp182, and 195-200 (WTRDYE) each bind substrate. A Mg(2+)-binding site is contributed by Glu208. Glu208 acts as the Proton acceptor in catalysis. Residues Lys215, Arg224, and Arg228 each contribute to the substrate site.

Homodimer. It depends on Mg(2+) as a cofactor.

The enzyme catalyses 2 GTP = 3',3'-c-di-GMP + 2 diphosphate. It participates in purine metabolism; 3',5'-cyclic di-GMP biosynthesis. Its activity is regulated as follows. Allosterically regulated by zinc, which seems to regulate the activity of the catalytic GGDEF domains by impeding their mobility and thus preventing productive encounter of the two GTP substrates. Subject to product inhibition by c-di-GMP at a KI of 44 uM. In terms of biological role, catalyzes the synthesis of cyclic-di-GMP (c-di-GMP) via the condensation of 2 GTP molecules. May act as a zinc sensor that controls, via c-di-GMP, post-translational events. Overexpression leads to a strong repression of swimming; swimming returnes to normal when residues 206-207 are both mutated to Ala. Overexpression also leads to a reduction in flagellar abundance and a 20-fold increase in c-di-GMP levels in vivo. Required for aminoglycoside-mediated induction of biofilm formation, it also plays a lesser role in biofilm production in response to other classes of translation inhibitors. The c-di-GMP produced by this enzyme up-regulates poly-GlcNAc production as well as the biofilm synthesis protein PgaD, although c-di-GMP is probably not the main inducing principle. C-di-GMP is a second messenger which controls cell surface-associated traits in bacteria. The polypeptide is Diguanylate cyclase DgcZ (Escherichia coli (strain K12)).